We begin with the raw amino-acid sequence, 2694 residues long: Neurobeachin-like protein 1 (2694 aa).

Disordered regions lie at residues 1289–1314 (VLMK…TDEE), 1330–1350 (SLED…DSSV), and 1381–1411 (CEMS…SVHS). Basic and acidic residues predominate over residues 1290–1314 (LMKDNDKNMSTEDTKKNSDEKTDEE). Polar residues predominate over residues 1383-1409 (MSDSGSQVPDSLPSTPSPVESTKSFSV). In terms of domain architecture, BEACH-type PH spans 1883 to 1980 (DQKEKLVLME…VRNKIYSRLL (98 aa)). In terms of domain architecture, BEACH spans 1992–2284 (RSPQELFKAS…QLLKEPHPPR (293 aa)). 2 WD repeats span residues 2439–2478 (RHMD…GVPV) and 2490–2531 (GHTN…RTLR).

The protein belongs to the WD repeat neurobeachin family. As to expression, highly expressed in brain, kidney, prostate and testis. Weakly expressed in ovary, small intestine, colon and peripheral blood leukocytes. May be correlative to several tumors, such as ovary serous adenocarcinoma and metastasis mammary gland carcinoma breast.

The polypeptide is Neurobeachin-like protein 1 (NBEAL1) (Homo sapiens (Human)).